The chain runs to 136 residues: Large ribosomal subunit protein uL16 (136 aa).

The protein belongs to the universal ribosomal protein uL16 family. As to quaternary structure, part of the 50S ribosomal subunit.

In terms of biological role, binds 23S rRNA and is also seen to make contacts with the A and possibly P site tRNAs. The sequence is that of Large ribosomal subunit protein uL16 from Sodalis glossinidius (strain morsitans).